The chain runs to 286 residues: NAD(P)H azoreductase (286 aa).

NADP(+)-binding positions include 6-11 (GGTGTI), Arg31, and 136-141 (GFFMQN).

It belongs to the NmrA-type oxidoreductase family. Azoreductase type 3 subfamily. Monomer.

In terms of biological role, catalyzes the reductive cleavage of azo bond in aromatic azo compounds to the corresponding amines. Uses preferentially NADPH rather than NADH as an electron donor for its activity. The enzyme reductively cleaved Orange II and carboxy-Orange II, and can also reduce several sulfonated structural analogs, which carry a hydroxy group in the 2 position of the naphthol ring. This is NAD(P)H azoreductase (azoB) from Xenophilus azovorans.